An 896-amino-acid chain; its full sequence is Myelin regulatory factor-like protein (896 aa).

The segment at residues 111 to 403 (GLPHRTFHNC…SNPGQFENDI (293 aa)) is a DNA-binding region (NDT80). The Peptidase S74 domain occupies 449 to 557 (SDSRAKQNVQ…KLTNNLEERI (109 aa)). Residues 541 to 573 (GAVKQLCKLTNNLEERIEELEIWNRKLARLKRL) are a coiled coil. Residues 622–638 (VFQSLVITLIAVMAFCL) form a helical membrane-spanning segment. Over residues 648–658 (APSSNLTSSQE) the composition is skewed to polar residues. The disordered stretch occupies residues 648–672 (APSSNLTSSQEPALPSTASPSAPNT). Residues 659-672 (PALPSTASPSAPNT) are compositionally biased toward low complexity.

Belongs to the MRF family.

It is found in the membrane. The polypeptide is Myelin regulatory factor-like protein (MYRFL) (Bos taurus (Bovine)).